Here is a 360-residue protein sequence, read N- to C-terminus: MKYLKILIIVTIFFFLLINVINCIDRKEIVQKEVKIKFKNLKSTLIKKYSESNMEKIQKHLKHILVERVADTPNHKKVREYIISQFDQLYWDIELDSFKDNTPFGEKTFTNIIVTSKFVNDDDEDDIDTKESNGNISSEPPKTLVLSAHYDSKYFKEFKFFGATDSAVPCSMLIDLAISLQSEIKKSKKKLMIIFFDGEEAFKEWSDTDSLYGSRHLANLLLDKKVITKDNEDLPISSSFYNTVEAFILLDLLGTPNPRFYMFNKKTESLFKKLSDIEDKLSLKRFISPKANKYFQNHFIGSDIQDDHIPFLNYVPTLHIIPYPFPNVWHTEKDDESCLDKNTIEDLSKIFKIFVGSYLI.

A signal peptide spans 1–23; it reads MKYLKILIIVTIFFFLLINVINC. N135 carries N-linked (GlcNAc...) asparagine glycosylation. D165 provides a ligand contact to Zn(2+). E199 (proton acceptor) is an active-site residue. E200 contributes to the Zn(2+) binding site. The Proton acceptor role is filled by D251. H330 is a Zn(2+) binding site.

It belongs to the glutaminyl-peptide cyclotransferase family.

It is found in the secreted. It carries out the reaction N-terminal L-glutaminyl-[peptide] = N-terminal 5-oxo-L-prolyl-[peptide] + NH4(+). Its function is as follows. Responsible for the biosynthesis of pyroglutamyl peptides. Has a bias against acidic and tryptophan residues adjacent to the N-terminal glutaminyl residue and a lack of importance of chain length after the second residue. Also catalyzes N-terminal pyroglutamate formation. In Dictyostelium discoideum (Social amoeba), this protein is Glutaminyl-peptide cyclotransferase (qpct).